Consider the following 243-residue polypeptide: Small ribosomal subunit protein uS3 (243 aa).

Residues 38–106 enclose the KH type-2 domain; the sequence is IRKYLNARLA…DIQINIFEVK (69 aa). The disordered stretch occupies residues 214–243; sequence PNFTQSKESGRGNNGGNNGGKNFKRKKNNR.

It belongs to the universal ribosomal protein uS3 family. Part of the 30S ribosomal subunit. Forms a tight complex with proteins S10 and S14.

Functionally, binds the lower part of the 30S subunit head. Binds mRNA in the 70S ribosome, positioning it for translation. The protein is Small ribosomal subunit protein uS3 of Bacteroides thetaiotaomicron (strain ATCC 29148 / DSM 2079 / JCM 5827 / CCUG 10774 / NCTC 10582 / VPI-5482 / E50).